The sequence spans 1142 residues: Ribonucleoside-diphosphate reductase large subunit (1142 aa).

The segment at 1 to 33 is disordered; that stretch reads MANRPAASALAGARSPSERQEPREPEVAPPGGD. Over residues 16–26 the composition is skewed to basic and acidic residues; it reads PSERQEPREPE. The RIP homotypic interaction motif (RHIM) motif lies at 55 to 75; sequence AYRISDSSFVQCGSNCSMIID. Positions 118-322 are disordered; it reads SGPSATTSVG…TDPGYPVPLE (205 aa). The span at 119–132 shows a compositional bias: polar residues; the sequence is GPSATTSVGTQTSG. Over residues 141–159 the composition is skewed to pro residues; sequence TPEPQGPQAVPPPPPPPFP. Positions 164–179 are enriched in basic and acidic residues; that stretch reads CCARRDARGGAEKDVG. Acidic residues predominate over residues 192–205; that stretch reads SETEDSDSSDEDTG. The segment covering 277-303 has biased composition (low complexity); it reads GSATDPRASADSDSAAHAAAPQADVAP. The alpha-crystallin domain stretch occupies residues 294-400; the sequence is AAAPQADVAP…CLDLPPVPPN (107 aa). Residues threonine 571, 586–587, glycine 617, 796–800, and 973–977 contribute to the substrate site; these read SC, NLCTE, and PTAAS. An intrachain disulfide couples cysteine 587 to cysteine 813. Asparagine 796 acts as the Proton acceptor in catalysis. The active-site Cysteine radical intermediate is cysteine 798. Glutamate 800 (proton acceptor) is an active-site residue.

This sequence belongs to the ribonucleoside diphosphate reductase large chain family. As to quaternary structure, heterotetramer composed of a homodimer of the large subunit (R1) and a homodimer of the small subunit (R2). Larger multisubunit protein complex are also active, composed of (R1)n(R2)n. May self-assemble (via RIP homotypic interaction motif/RHIM) into homomeric fibrillar amyloid structures. Interacts (via RHIM) with human RIPK1 (via RHIM). Interacts (via RHIM) with human RIPK3 (via RHIM). May interact (via RHIM) with human ZBP1 (via RHIM). Interacts (via C-terminus) with host CASP8.

Its subcellular location is the host cell membrane. It localises to the host endosome membrane. It carries out the reaction a 2'-deoxyribonucleoside 5'-diphosphate + [thioredoxin]-disulfide + H2O = a ribonucleoside 5'-diphosphate + [thioredoxin]-dithiol. Functionally, ribonucleoside-diphosphate reductase holoenzyme that provides the precursors necessary for viral DNA synthesis. Allows virus growth in non-dividing cells, as well as reactivation from latency in infected hosts. Catalyzes the biosynthesis of deoxyribonucleotides from the corresponding ribonucleotides. The N-terminal region confers antiapoptotic activity in differentiated cells such as neurons and is important for viral reactivation to increase neural survivability. Prevents host necroptosis by targeting host RIPK1 and RIPK3, thereby hampering the formation of necroptotic RIPK1-RIPK3 complexes. May form hetero-amyloid structures with host proteins RIPK3 or ZBP1, thereby preventing RIPK3- and ZBP1-mediated necroptosis. In addition, inhibits extrinsic apoptosis by targeting host CASP8. In Homo sapiens (Human), this protein is Ribonucleoside-diphosphate reductase large subunit.